Here is a 62-residue protein sequence, read N- to C-terminus: Ponericin-W-like 32.2 (62 aa).

Positions 1-23 (MKCKKQLLVIFFAYFLVVNESEA) are cleaved as a signal peptide. The propeptide occupies 49–62 (RALMKRDLEDIMDP).

Belongs to the non-disulfide-bridged peptide (NDBP) superfamily. Medium-length antimicrobial peptide (group 3) family. Ponericin-W subfamily. As to expression, expressed by the venom gland.

Its subcellular location is the secreted. It is found in the target cell membrane. Functionally, antimicrobial peptide with potent activity against a range of Gram-positive and Gram-negative bacteria. Has high hemolytic activity against erythrocytes. May act by disrupting the integrity of the bacterial cell membrane. The chain is Ponericin-W-like 32.2 from Lychas mucronatus (Chinese swimming scorpion).